The chain runs to 689 residues: MNNLLIEIGAEEIPAGYILPALTSFCDRVTAALTGARINHGKTAVFGTPRRLALMVEDVQACQAPQKTTLMGPPQRIGFDNEGKPTLAGVKFAEKAGIVPEEIIITDNGKGPYLSAVIEESCLLTEAILEGVLPELIQAIPFPKSMHWGDLDVTFARPIVSLTALLGKTVLNFKIGNIASASFVFGHSFMAPERFELESADAYLDTLRKAGVVADIGERRTILKESIKAAADKACATIIEDEELVDIVNNLVEYPYPVVGHFDEVFLELPDEVLITAMREHQKYFALADTAGKLMPCFIAVNNTRARDMDVVAKGHGKVIRARLADAQFFYHVDLESTLDDFVEKLKAVTFQASLGSMYEKTGRLVVLVEFLAGLVNADQELQKKLMRAARLSKADLVSQMVIEFTKLQGIIGRVYAQKGGEDPEVAMAIEEHYRPVYSGGDLPRTDTGKILAIADKTDTLCGCFSANLIPTGASDPYALRRQSIGILQIMLEAGFDFSLRALVRRGVAQYQTDPDKKNEISTQILEFLKGRMTNMLVDQGFSREAVNAALSVSFYNVPDAFLRIKALDILRQEPDFEPLSTAFKRVVNILKKAGGDAKTRVNVNLFNCDAEKALHQACGEVTERVDTCIKAGDYGAALKEISTLRPHVDRLFEDVMVMDDDVALRINRMALLSSVAALFRNIADFSQI.

It belongs to the class-II aminoacyl-tRNA synthetase family. As to quaternary structure, tetramer of two alpha and two beta subunits.

It is found in the cytoplasm. It catalyses the reaction tRNA(Gly) + glycine + ATP = glycyl-tRNA(Gly) + AMP + diphosphate. This is Glycine--tRNA ligase beta subunit from Desulforapulum autotrophicum (strain ATCC 43914 / DSM 3382 / VKM B-1955 / HRM2) (Desulfobacterium autotrophicum).